The primary structure comprises 433 residues: GPI mannosyltransferase 2 (433 aa).

A run of 9 helical transmembrane segments spans residues 4 to 24, 109 to 129, 148 to 165, 172 to 194, 204 to 226, 247 to 267, 322 to 342, 354 to 374, and 410 to 430; these read LVKPVLFFVVVRIVQYAIISL, TAVILENLIYFMAMITLFYLT, ATFTAILFSCNSGSGFFT, LSFLFSFLGILAREFSVTPIIPY, FYYTIVSSFCFTIATLNRSNCIL, ALLFPVLAGCIVALFFVRQQF, IPNFLFGLPTFVILFSSTFYF, LIFITRAFTIIILLFAHVQII, and GYIYWLIFWVPIQTSLFVFFL.

This sequence belongs to the PIGV family.

The protein localises to the endoplasmic reticulum membrane. The protein operates within glycolipid biosynthesis; glycosylphosphatidylinositol-anchor biosynthesis. In terms of biological role, mannosyltransferase involved in glycosylphosphatidylinositol-anchor biosynthesis. Transfers the second mannose to the glycosylphosphatidylinositol during GPI precursor assembly. This Candida glabrata (strain ATCC 2001 / BCRC 20586 / JCM 3761 / NBRC 0622 / NRRL Y-65 / CBS 138) (Yeast) protein is GPI mannosyltransferase 2 (GPI18).